A 1149-amino-acid polypeptide reads, in one-letter code: MSNCWCFIFCKERVRSNSSSPQHDGTSREEADHQVDVSDGIRLVPDKAEATMATASDEIMHQDIVPLCAADIQEQLKKRFAYLSGGRGQDGSPVITFPDYPAFSEIPDKEFQNVMTYLTSIPSLQDAGIGFILVIDRRQDKWTSVKASVLRIAASFPANLQLVLVLRPTGFFQRTLSDIAFKFNRDEFKMKVPVMMLSSVPELHGYIDKSQLTEDLGGTLDYCHSRWLCHRTAIESFALMVKQTAQMLQAFGTELAETELPNDVQSTSLVLSAHTEKKAKVKEDLQLALTEGNSILESLREPLAESIVHSVNQDQLDNQATVKRLLTQLNETEAAFDEFWAKHQQKLEQCLQLRHFEQGFREVKTALDSMSQKIAAFTDVGNSLAHVQHLLKDLTTFEEKSSVAVDKARALSLEGQQLIENRHYAVDSIHPKCEELQHLCDHFASEVTRRRDLLSKSLELHSLLETSMKWSDEGIFLLASQPVDKCQSQDGAEAALQEIEKFLETGAENKIQELNKIYKEYECILNQDLLEHVQKVFQKQESTEEMFHRRQASLKKLAAKQTRPVQPVAPRPEALTKSPSPSPGSWRSSENSSSEGNALRRGPYRRAKSEMSEPRQGRTSSTGEEEESLAILRRHVMNELLDTERAYVEELLCVLEGYAAEMDNPLMAHLISTGLQNKKNILFGNMEEIYHFHNRIFLRELESCIDCPELVGRCFLERMEEFQIYEKYCQNKPRSESLWRQCSDCPFFQECQKKLDHKLSLDSYLLKPVQRITKYQLLLKEMLKYSKHCEGAEDLQEALSSILGILKAVNDSMHLIAITGYDGNLGDLGKLLMQGSFSVWTDHKKGHTKVKELARFKPMQRHLFLHEKAVLFCKKREENGEGYEKAPSYSYKQSLNMTAVGITENVKGDTKKFEIWYNAREEVYIIQAPTPEIKAAWVNEIRKVLTSQLQACREASQHRALEQSHSLPLPTPASTSPTKGSTRNVKKLEDRKTDPLCLEGCVSSSLPKPPEKGKGWSKTSHSLEAPEEDGGWSSAEELINSSDAEEDGGVGPRKLVPGKYTVLMDGEKGGSDTLAMRSGDMVEVVEEGTEGLWYVRDLTSSKEGWVPASSLATLLGKSSSAQCLSSSGKTHCARQLCPEPAKILSPEPV.

The CRAL-TRIO domain occupies Met52–His224. The stretch at His355–Leu454 is one Spectrin repeat. Phosphoserine occurs at positions 457, 462, 471, and 480. Residues Leu503–Asp528 adopt a coiled-coil conformation. Residues Lys555 to Glu627 are disordered. Over residues Pro583–Ser594 the composition is skewed to low complexity. Basic and acidic residues predominate over residues Ala607–Gln616. Position 621 is a phosphoserine (Ser621). Thr622 carries the post-translational modification Phosphothreonine. The DH domain occupies Leu632–Ser812. The PH domain maps to Lys830–Thr946. The disordered stretch occupies residues Ser956–Ser1033. A compositionally biased stretch (low complexity) spans Ser964–Thr978. Phosphoserine is present on residues Ser1033, Ser1034, Ser1041, and Ser1042. One can recognise an SH3 domain in the interval Leu1055–Gly1116.

It belongs to the MCF2 family. As to quaternary structure, interacts with GTP-bound RAC1. Interacts with CDC42. Interacts with RHOA. Interacts with CCPG1, which results in specific inhibition of its exchange activity toward RHOA, but does not affect its activity on CDC42. In terms of processing, mainly phosphorylated on serine. Highest expression in the brain, where it is found in neurons and alpha-tanycytes (at protein level). Detected in brain, and at lower levels in the heart.

Its subcellular location is the cytoplasm. The protein localises to the cell membrane. In terms of biological role, guanine nucleotide exchange factor that catalyzes guanine nucleotide exchange on RHOA and CDC42, and thereby contributes to the regulation of RHOA and CDC42 signaling pathways. Seems to lack activity with RAC1. Becomes activated and highly tumorigenic by truncation of the N-terminus. The sequence is that of Guanine nucleotide exchange factor DBS (Mcf2l) from Rattus norvegicus (Rat).